A 258-amino-acid polypeptide reads, in one-letter code: Phosphate import ATP-binding protein PstB (258 aa).

The ABC transporter domain occupies 5–247 (LDLKDVNIYY…EKIFSNPRQK (243 aa)). ATP is bound at residue 37–44 (GPSGCGKS).

The protein belongs to the ABC transporter superfamily. Phosphate importer (TC 3.A.1.7) family. In terms of assembly, the complex is composed of two ATP-binding proteins (PstB), two transmembrane proteins (PstC and PstA) and a solute-binding protein (PstS).

It is found in the cell membrane. It catalyses the reaction phosphate(out) + ATP + H2O = ADP + 2 phosphate(in) + H(+). In terms of biological role, part of the ABC transporter complex PstSACB involved in phosphate import. Responsible for energy coupling to the transport system. This chain is Phosphate import ATP-binding protein PstB, found in Mycolicibacterium smegmatis (Mycobacterium smegmatis).